The following is a 38-amino-acid chain: Potassium channel toxin alpha-KTx 3.2 (38 aa).

3 cysteine pairs are disulfide-bonded: C8–C28, C14–C33, and C18–C35.

This sequence belongs to the short scorpion toxin superfamily. Potassium channel inhibitor family. Alpha-KTx 03 subfamily. Expressed by the venom gland.

The protein resides in the secreted. Functionally, potent inhibitor of the Shaker potassium channels and its mammalian homologs (Kv1.1/KCNA1, Kv1.3/KCNA3, Kv1.6/KCNA6) (Ki&lt;1 nM for all channels). Also blocks Kv1.2/KCNA2 (IC(50)=26.8 nM). It also shows a weak interaction with nicotinic acetylcholine receptors (nAChR), suggesting it may weakly inhibit it. In Leiurus hebraeus (Hebrew deathstalker scorpion), this protein is Potassium channel toxin alpha-KTx 3.2.